A 211-amino-acid chain; its full sequence is Large ribosomal subunit protein uL3 (211 aa).

The tract at residues 126 to 147 is disordered; it reads HGQSRGPMAHGSRYHRRPGSMG.

This sequence belongs to the universal ribosomal protein uL3 family. Part of the 50S ribosomal subunit. Forms a cluster with proteins L14 and L19.

One of the primary rRNA binding proteins, it binds directly near the 3'-end of the 23S rRNA, where it nucleates assembly of the 50S subunit. The sequence is that of Large ribosomal subunit protein uL3 from Geobacillus thermodenitrificans (strain NG80-2).